The sequence spans 266 residues: Hydroxyethylthiazole kinase (266 aa).

Residue methionine 43 participates in substrate binding. ATP contacts are provided by arginine 119 and threonine 166. Glycine 193 serves as a coordination point for substrate.

It belongs to the Thz kinase family. Mg(2+) serves as cofactor.

It carries out the reaction 5-(2-hydroxyethyl)-4-methylthiazole + ATP = 4-methyl-5-(2-phosphooxyethyl)-thiazole + ADP + H(+). Its pathway is cofactor biosynthesis; thiamine diphosphate biosynthesis; 4-methyl-5-(2-phosphoethyl)-thiazole from 5-(2-hydroxyethyl)-4-methylthiazole: step 1/1. In terms of biological role, catalyzes the phosphorylation of the hydroxyl group of 4-methyl-5-beta-hydroxyethylthiazole (THZ). This Methanococcus maripaludis (strain DSM 14266 / JCM 13030 / NBRC 101832 / S2 / LL) protein is Hydroxyethylthiazole kinase.